A 197-amino-acid chain; its full sequence is Probable thymidylate kinase (197 aa).

7–14 (GLDGSGKT) is an ATP binding site.

It belongs to the thymidylate kinase family.

It catalyses the reaction dTMP + ATP = dTDP + ADP. The polypeptide is Probable thymidylate kinase (Halorubrum lacusprofundi (strain ATCC 49239 / DSM 5036 / JCM 8891 / ACAM 34)).